The primary structure comprises 202 residues: Putative scarecrow-like protein 16 (202 aa).

A VHIID region spans residues 1 to 26; sequence MQIPTLIDSMANKLHKKPPPLLKLTV. One can recognise a GRAS domain in the interval 1 to 202; it reads MQIPTLIDSM…RVERLEPKSR (202 aa). Positions 45 to 82 are leucine repeat II (LRII); that stretch reads ELGSKLVNFATTRNVAMEFRIISSSYSDGLSSLIEQLR. The interval 92–184 is PFYRE; it reads LVVNCHMMLH…EADISWKIDN (93 aa). The interval 187-202 is SAW; it reads AKEGAERVERLEPKSR.

The protein belongs to the GRAS family. Expressed in seedlings, leaves and flowers.

It is found in the nucleus. In terms of biological role, probable transcription factor involved in plant development. The polypeptide is Putative scarecrow-like protein 16 (SCL16) (Arabidopsis thaliana (Mouse-ear cress)).